The primary structure comprises 189 residues: GMP synthase [glutamine-hydrolyzing] subunit A (189 aa).

The Glutamine amidotransferase type-1 domain maps to 5-189; that stretch reads KILVVNNYGQ…TNFLEICEKY (185 aa). Cysteine 79 acts as the Nucleophile in catalysis. Catalysis depends on residues histidine 166 and glutamate 168.

In terms of assembly, heterodimer composed of a glutamine amidotransferase subunit (A) and a GMP-binding subunit (B).

The catalysed reaction is XMP + L-glutamine + ATP + H2O = GMP + L-glutamate + AMP + diphosphate + 2 H(+). The protein operates within purine metabolism; GMP biosynthesis; GMP from XMP (L-Gln route): step 1/1. In terms of biological role, catalyzes the synthesis of GMP from XMP. In Methanosarcina barkeri (strain Fusaro / DSM 804), this protein is GMP synthase [glutamine-hydrolyzing] subunit A.